Here is a 136-residue protein sequence, read N- to C-terminus: Holo-[acyl-carrier-protein] synthase (136 aa).

Mg(2+) is bound by residues Asp7 and Glu53.

The protein belongs to the P-Pant transferase superfamily. AcpS family. It depends on Mg(2+) as a cofactor.

Its subcellular location is the cytoplasm. It catalyses the reaction apo-[ACP] + CoA = holo-[ACP] + adenosine 3',5'-bisphosphate + H(+). Its function is as follows. Transfers the 4'-phosphopantetheine moiety from coenzyme A to a Ser of acyl-carrier-protein. The chain is Holo-[acyl-carrier-protein] synthase from Roseiflexus castenholzii (strain DSM 13941 / HLO8).